We begin with the raw amino-acid sequence, 198 residues long: Pyridoxal 5'-phosphate synthase subunit PdxT (198 aa).

Gly-49–Ser-51 provides a ligand contact to L-glutamine. Cys-81 acts as the Nucleophile in catalysis. L-glutamine-binding positions include Arg-113 and Ile-141 to Arg-142. Active-site charge relay system residues include His-177 and Glu-179.

This sequence belongs to the glutaminase PdxT/SNO family. In the presence of PdxS, forms a dodecamer of heterodimers. Only shows activity in the heterodimer.

The enzyme catalyses aldehydo-D-ribose 5-phosphate + D-glyceraldehyde 3-phosphate + L-glutamine = pyridoxal 5'-phosphate + L-glutamate + phosphate + 3 H2O + H(+). The catalysed reaction is L-glutamine + H2O = L-glutamate + NH4(+). It participates in cofactor biosynthesis; pyridoxal 5'-phosphate biosynthesis. Catalyzes the hydrolysis of glutamine to glutamate and ammonia as part of the biosynthesis of pyridoxal 5'-phosphate. The resulting ammonia molecule is channeled to the active site of PdxS. The chain is Pyridoxal 5'-phosphate synthase subunit PdxT from Mycobacterium leprae (strain TN).